The primary structure comprises 526 residues: Protein translocase subunit SecD (526 aa).

Helical transmembrane passes span 8–28 (LIVFIFALLLGVGFSVPSLLE), 356–376 (IIALVGGFILVMGFMALYYSM), 379–399 (VIACMALVVNLFLIVAVMAIF), 405–425 (LPGMAGIVLTVGIAVDANIII), 453–473 (AIFDSNITSLIASVLLYAYGT), and 478–498 (GFALTTGIGILASIITAIIGT).

It belongs to the SecD/SecF family. SecD subfamily. In terms of assembly, forms a complex with SecF. Part of the essential Sec protein translocation apparatus which comprises SecA, SecYEG and auxiliary proteins SecDF-YajC and YidC.

Its subcellular location is the cell inner membrane. In terms of biological role, part of the Sec protein translocase complex. Interacts with the SecYEG preprotein conducting channel. SecDF uses the proton motive force (PMF) to complete protein translocation after the ATP-dependent function of SecA. The polypeptide is Protein translocase subunit SecD (Helicobacter pylori (strain J99 / ATCC 700824) (Campylobacter pylori J99)).